The following is a 166-amino-acid chain: Large ribosomal subunit protein uL10 (166 aa).

The protein belongs to the universal ribosomal protein uL10 family. As to quaternary structure, part of the ribosomal stalk of the 50S ribosomal subunit. The N-terminus interacts with L11 and the large rRNA to form the base of the stalk. The C-terminus forms an elongated spine to which L12 dimers bind in a sequential fashion forming a multimeric L10(L12)X complex.

Its function is as follows. Forms part of the ribosomal stalk, playing a central role in the interaction of the ribosome with GTP-bound translation factors. The protein is Large ribosomal subunit protein uL10 (rplJ) of Neisseria meningitidis serogroup A / serotype 4A (strain DSM 15465 / Z2491).